We begin with the raw amino-acid sequence, 141 residues long: uncharacterized protein (141 aa).

The MaoC-like domain maps to 8–112; that stretch reads IGQVFKTKSL…VLDKQPKRNE (105 aa).

This is an uncharacterized protein from Bacillus subtilis (strain 168).